Consider the following 200-residue polypeptide: Recombination protein RecR (200 aa).

The C4-type zinc-finger motif lies at 57–72 (CSECRTFTEEDTCAIC). Residues 81 to 176 (GEMCIVESPA…PASRIAHGVP (96 aa)) form the Toprim domain.

The protein belongs to the RecR family.

Functionally, may play a role in DNA repair. It seems to be involved in an RecBC-independent recombinational process of DNA repair. It may act with RecF and RecO. The sequence is that of Recombination protein RecR from Aliivibrio fischeri (strain ATCC 700601 / ES114) (Vibrio fischeri).